The primary structure comprises 997 residues: Translation initiation factor IF-2 (997 aa).

Positions 101-406 (ELAAEQAAAR…SRNQHQDRRH (306 aa)) are disordered. 2 stretches are compositionally biased toward low complexity: residues 116 to 185 (AEAV…QAEP) and 195 to 209 (AAPA…EPAK). The segment covering 231 to 242 (TELTSQTPTPVA) has biased composition (polar residues). Positions 256-280 (AEPAAAPKTTAKPGEIRRAAAPAAP) are enriched in low complexity. Basic and acidic residues predominate over residues 281–292 (DRAREEARRAAE). Over residues 385–394 (RAGGKGGRGG) the composition is skewed to gly residues. The tr-type G domain occupies 498–665 (PRAPVVTVMG…NVLLQAEILE (168 aa)). The interval 507–514 (GHVDHGKT) is G1. Position 507–514 (507–514 (GHVDHGKT)) interacts with GTP. The segment at 532–536 (GITQH) is G2. The interval 553 to 556 (DTPG) is G3. GTP is bound by residues 553–557 (DTPGH) and 607–610 (NKID). Residues 607-610 (NKID) are G4. The tract at residues 643–645 (SAK) is G5.

This sequence belongs to the TRAFAC class translation factor GTPase superfamily. Classic translation factor GTPase family. IF-2 subfamily.

The protein resides in the cytoplasm. One of the essential components for the initiation of protein synthesis. Protects formylmethionyl-tRNA from spontaneous hydrolysis and promotes its binding to the 30S ribosomal subunits. Also involved in the hydrolysis of GTP during the formation of the 70S ribosomal complex. The chain is Translation initiation factor IF-2 from Bordetella pertussis (strain Tohama I / ATCC BAA-589 / NCTC 13251).